A 1528-amino-acid chain; its full sequence is Intraflagellar transport protein 121 (1528 aa).

4 WD repeats span residues Ser123–Pro170, Ser244–Ser285, Pro619–Leu667, and Pro759–Ser798. Positions Asp914–Gln933 are disordered. Over residues Thr920–Gln933 the composition is skewed to low complexity.

Its subcellular location is the cell projection. It is found in the cilium. The protein localises to the flagellum. The protein resides in the cytoplasm. It localises to the cytoskeleton. Its subcellular location is the flagellum axoneme. It is found in the flagellum basal body. Component of the intraflagellar transport complex A (IFT-A) involved in flagellar assembly. The chain is Intraflagellar transport protein 121 from Giardia intestinalis (strain ATCC 50803 / WB clone C6) (Giardia lamblia).